The chain runs to 313 residues: Protein TIFY 4A (313 aa).

The disordered stretch occupies residues 118–149 (SPRSAEFSGGSGHFVSEKDGHKTTISPRSPAE). A Tify domain is found at 150 to 185 (TSELVGQMTIFYSGKVNVYDGIPPEKARSIMHFAAN). Disordered regions lie at residues 220-256 (KANS…KAKK) and 281-313 (QNLG…SEGI). The Jas signature appears at 232–254 (QANRKVSLQRYREKRKDRKFSKA). Positions 234–241 (NRKVSLQR) match the Nuclear localization signal motif. Over residues 243 to 256 (REKRKDRKFSKAKK) the composition is skewed to basic residues.

It belongs to the TIFY/JAZ family. Interacts with AFPH2/NINJA.

It localises to the nucleus. Functionally, regulates the arrest of dispersed meristematic cells during lamina development. The polypeptide is Protein TIFY 4A (TIFY4A) (Arabidopsis thaliana (Mouse-ear cress)).